The primary structure comprises 248 residues: Triosephosphate isomerase (248 aa).

9–11 (NWK) contributes to the substrate binding site. Residue His92 is the Electrophile of the active site. The active-site Proton acceptor is Glu164. Substrate contacts are provided by residues Gly170, Ser210, and 231-232 (GG).

It belongs to the triosephosphate isomerase family. As to quaternary structure, homodimer.

The protein localises to the cytoplasm. It catalyses the reaction D-glyceraldehyde 3-phosphate = dihydroxyacetone phosphate. It functions in the pathway carbohydrate biosynthesis; gluconeogenesis. It participates in carbohydrate degradation; glycolysis; D-glyceraldehyde 3-phosphate from glycerone phosphate: step 1/1. In terms of biological role, involved in the gluconeogenesis. Catalyzes stereospecifically the conversion of dihydroxyacetone phosphate (DHAP) to D-glyceraldehyde-3-phosphate (G3P). The protein is Triosephosphate isomerase of Mycoplasma capricolum subsp. capricolum (strain California kid / ATCC 27343 / NCTC 10154).